The primary structure comprises 291 residues: Tyramine--L-glutamate ligase (291 aa).

Positions 104–274 (KYPVKNLGCS…LAELLIKNAN (171 aa)) constitute an ATP-grasp domain. 131 to 176 (KDYVKTPKTFKPKKYVIKKIDGCGGKFNLFDENFLIQEFVEGESLS) lines the ATP pocket. Mg(2+) contacts are provided by aspartate 236, glutamate 247, and asparagine 249. 3 residues coordinate Mn(2+): aspartate 236, glutamate 247, and asparagine 249.

It depends on Mg(2+) as a cofactor. Mn(2+) is required as a cofactor.

It carries out the reaction tyramine + L-glutamate + ATP = gamma-L-glutamyltyramine + ADP + phosphate + H(+). Its pathway is cofactor biosynthesis; methanofuran biosynthesis. In terms of biological role, catalyzes the formation of an amide bond between tyramine and the gamma carboxy group of L-glutamate. The enzyme also accepts phenylethylamine in vitro. This Methanocaldococcus fervens (strain DSM 4213 / JCM 15782 / AG86) (Methanococcus fervens) protein is Tyramine--L-glutamate ligase.